The chain runs to 374 residues: Putative heme chaperone HemW-like protein (374 aa).

Residues 1–231 (MKLLGLYINI…EKLLKKSGYK (231 aa)) form the Radical SAM core domain.

This sequence belongs to the anaerobic coproporphyrinogen-III oxidase family. HemW subfamily.

It is found in the cytoplasm. Functionally, might be a heme chaperone; in E.coli heme binds independently of binding to [4Fe-4S] or S-adenosyl-L-methionine. The chain is Putative heme chaperone HemW-like protein from Buchnera aphidicola subsp. Baizongia pistaciae (strain Bp).